The following is a 487-amino-acid chain: Probable glutamate receptor (487 aa).

Residues 1–23 (MDKGLHFIFCVVTAVLLLRESSQ) form the signal peptide. Topologically, residues 24–169 (TGAMRNDDAM…FFHFLAPFSK (146 aa)) are extracellular. Residue asparagine 104 is glycosylated (N-linked (GlcNAc...) asparagine). The helical transmembrane segment at 170–190 (ETWTGLLFAYVLTCVCLFLVA) threads the bilayer. Residues 191–235 (RLSPCEWNEPKNEENHFTFLNSLWFGAGALTLQGVTPRPKAFSVR) lie on the Cytoplasmic side of the membrane. The chain crosses the membrane as a helical span at residues 236 to 256 (VIAAIWWLFTIALLAAYIANF). The Extracellular segment spans residues 257-419 (TALLSSGSEQ…EGWSPLQPQA (163 aa)). A helical membrane pass occupies residues 420 to 440 (LGGLFLTLAIGLALGVIAAMV). The Cytoplasmic portion of the chain corresponds to 441–487 (ELSNKSRHAAGHIKKSCCSIFTEEMCTRLRIKENTRQTQETSGRANA).

This sequence belongs to the glutamate-gated ion channel (TC 1.A.10.1) family.

The protein localises to the cell membrane. Its subcellular location is the postsynaptic cell membrane. Its function is as follows. Receptor for glutamate. L-glutamate acts as an excitatory neurotransmitter at many synapses in the central nervous system. The postsynaptic actions of Glu are mediated by a variety of receptors that are named according to their selective agonists. This Gallus gallus (Chicken) protein is Probable glutamate receptor (KBP).